The sequence spans 169 residues: Lutropin/choriogonadotropin subunit beta (169 aa).

Residues 1–20 form the signal peptide; the sequence is MEMLQGLLLWMLLSVGGVWA. 6 cysteine pairs are disulfide-bonded: Cys-29–Cys-77, Cys-43–Cys-92, Cys-46–Cys-130, Cys-54–Cys-108, Cys-58–Cys-110, and Cys-113–Cys-120. Asn-33 carries N-linked (GlcNAc...) asparagine glycosylation. A disordered region spans residues 131–169; it reads APQTSSSCKDPPSQPLTSTSTPTPGASRRSSHPLPINTS. A compositionally biased stretch (low complexity) spans 145 to 158; that stretch reads PLTSTSTPTPGASR.

Belongs to the glycoprotein hormones subunit beta family. As to quaternary structure, heterodimer of a common alpha chain and a unique beta chain which confers biological specificity to thyrotropin, lutropin, follitropin and gonadotropin.

Its subcellular location is the secreted. Promotes spermatogenesis and ovulation by stimulating the testes and ovaries to synthesize steroids. The chain is Lutropin/choriogonadotropin subunit beta (LHB) from Equus asinus (Donkey).